Here is a 271-residue protein sequence, read N- to C-terminus: Ribosomal RNA small subunit methyltransferase I (271 aa).

It belongs to the methyltransferase superfamily. RsmI family.

The protein resides in the cytoplasm. It carries out the reaction cytidine(1402) in 16S rRNA + S-adenosyl-L-methionine = 2'-O-methylcytidine(1402) in 16S rRNA + S-adenosyl-L-homocysteine + H(+). Its function is as follows. Catalyzes the 2'-O-methylation of the ribose of cytidine 1402 (C1402) in 16S rRNA. The protein is Ribosomal RNA small subunit methyltransferase I of Campylobacter fetus subsp. fetus (strain 82-40).